Here is a 376-residue protein sequence, read N- to C-terminus: NifS-like protein (376 aa).

Pyridoxal 5'-phosphate-binding positions include Ser-58–Glu-59 and Ser-184–Asn-186.

It belongs to the class-V pyridoxal-phosphate-dependent aminotransferase family. NifS/IscS subfamily. Pyridoxal 5'-phosphate serves as cofactor.

The protein resides in the virion. This African swine fever virus (isolate Tick/Malawi/Lil 20-1/1983) (ASFV) protein is NifS-like protein.